The primary structure comprises 91 residues: MNSLLKVAVVCLVMLVACFVPRVILTDDADTEYNSDYLLPKRAGCKCADGRQETYYFMGCQGGWYRCSPHYVIGDCCKKFSGKYGTFAVRF.

An N-terminal signal peptide occupies residues 1–26 (MNSLLKVAVVCLVMLVACFVPRVILT). Cystine bridges form between cysteine 45–cysteine 76, cysteine 47–cysteine 67, and cysteine 60–cysteine 77.

As to expression, expressed in ectodermal gland cells.

In terms of biological role, has toxic effects on zebrafish larvae. It causes contractile paralysis and twitching of the tail within 20 minutes, followed by death within 30 minutes. Does not show any toxicity when injected into arthropods (cherry shrimps or grass shrimps). This is N.vectensis toxin 8 from Nematostella vectensis (Starlet sea anemone).